Here is a 263-residue protein sequence, read N- to C-terminus: Receptor expression-enhancing protein 3-A (263 aa).

2 helical membrane-spanning segments follow: residues 2-22 (VSWI…PAYF) and 35-55 (YVRW…EAIA). 2 disordered regions span residues 161-228 (GDET…SMRS) and 240-263 (YASL…AHHL). Acidic residues predominate over residues 199–214 (DDNTDEDVEVNSEDEV). Residues 242–251 (SLKHKPKKRP) show a composition bias toward basic residues.

This sequence belongs to the DP1 family.

The protein localises to the endoplasmic reticulum membrane. Microtubule-binding protein required to ensure proper cell division and nuclear envelope reassembly by sequestering the endoplasmic reticulum away from chromosomes during mitosis. Probably acts by clearing the endoplasmic reticulum membrane from metaphase chromosomes. The sequence is that of Receptor expression-enhancing protein 3-A (reep3-a) from Xenopus laevis (African clawed frog).